Reading from the N-terminus, the 378-residue chain is Queuine tRNA-ribosyltransferase (378 aa).

Catalysis depends on D90, which acts as the Proton acceptor. Substrate-binding positions include 90–94, D152, Q194, and G223; that span reads DSGGY. The segment at 254-260 is RNA binding; sequence GVGKPED. The active-site Nucleophile is D273. Residues 278 to 282 are RNA binding; important for wobble base 34 recognition; it reads TRNAR. C311, C313, C316, and H342 together coordinate Zn(2+).

Belongs to the queuine tRNA-ribosyltransferase family. As to quaternary structure, homodimer. Within each dimer, one monomer is responsible for RNA recognition and catalysis, while the other monomer binds to the replacement base PreQ1. The cofactor is Zn(2+).

It carries out the reaction 7-aminomethyl-7-carbaguanine + guanosine(34) in tRNA = 7-aminomethyl-7-carbaguanosine(34) in tRNA + guanine. The protein operates within tRNA modification; tRNA-queuosine biosynthesis. Its function is as follows. Catalyzes the base-exchange of a guanine (G) residue with the queuine precursor 7-aminomethyl-7-deazaguanine (PreQ1) at position 34 (anticodon wobble position) in tRNAs with GU(N) anticodons (tRNA-Asp, -Asn, -His and -Tyr). Catalysis occurs through a double-displacement mechanism. The nucleophile active site attacks the C1' of nucleotide 34 to detach the guanine base from the RNA, forming a covalent enzyme-RNA intermediate. The proton acceptor active site deprotonates the incoming PreQ1, allowing a nucleophilic attack on the C1' of the ribose to form the product. After dissociation, two additional enzymatic reactions on the tRNA convert PreQ1 to queuine (Q), resulting in the hypermodified nucleoside queuosine (7-(((4,5-cis-dihydroxy-2-cyclopenten-1-yl)amino)methyl)-7-deazaguanosine). The protein is Queuine tRNA-ribosyltransferase of Aquifex aeolicus (strain VF5).